Here is a 446-residue protein sequence, read N- to C-terminus: Solute carrier family 52, riboflavin transporter, member 2 (446 aa).

A run of 4 helical transmembrane segments spans residues 14–34, 47–67, 79–99, and 104–124; these read LLVALFGMGSWAAINGIWVEL, LPSYLSVLVALGNLGLLVVTL, APIQVVQALSVVGTALLAPLW, and VMAGQVHSVAFLALTFVLALA. Asn-129 carries N-linked (GlcNAc...) asparagine glycosylation. The next 2 membrane-spanning stretches (helical) occupy residues 147–167 and 196–216; these read FFLGQGLSALLPCVLALGQGV and FFGALTALLVISAAAFQGLLL. The tract at residues 228 to 267 is disordered; sequence GSGTGLRGGAPGVEEEEEEEASPLQEPPSQAAGNTPSPDP. The segment covering 229–238 has biased composition (gly residues); that stretch reads SGTGLRGGAP. Polar residues predominate over residues 254-263; it reads PPSQAAGNTP. 5 helical membrane-spanning segments follow: residues 278-298, 313-333, 340-360, 367-387, and 405-425; these read ACLLGLLATTSALTNGVLPAV, LAVVLGSASNPLACFLAMGIL, LGGLSLLGTLFGAYLMALAIL, VGTSAGMVLVVVLWALCLGVF, and ALLAAGVAIQVGSLLGAVTMF.

The protein belongs to the riboflavin transporter family.

It localises to the cell membrane. The catalysed reaction is riboflavin(in) = riboflavin(out). Its activity is regulated as follows. Riboflavin transport is Na(+)-independent but moderately pH-sensitive. Activity is strongly inhibited by riboflavin analogs, such as lumiflavin. Weakly inhibited by flavin adenine dinucleotide (FAD) and flavin mononucleotide (FMN). Functionally, plasma membrane transporter mediating the uptake by cells of the water soluble vitamin B2/riboflavin that plays a key role in biochemical oxidation-reduction reactions of the carbohydrate, lipid, and amino acid metabolism. May also act as a receptor for 4-hydroxybutyrate. (Microbial infection) In case of infection by porcine endogenous retrovirus (PERV-A), acts as a cell receptor to retroviral envelopes. The protein is Solute carrier family 52, riboflavin transporter, member 2 (SLC52A2) of Sus scrofa (Pig).